The following is a 474-amino-acid chain: Putative pectinesterase/pectinesterase inhibitor 38 (474 aa).

Positions 1-130 (MVFGNEMCDE…HSLESITIDV (130 aa)) are pectinesterase inhibitor 38. An N-linked (GlcNAc...) asparagine glycan is attached at Asn80. Residues 164–461 (DVVVAQDGSG…TLPKFIDSAS (298 aa)) are pectinesterase 38. Substrate is bound by residues Thr241 and Gln271. Asp294 serves as the catalytic Proton donor; for pectinesterase activity. Cysteines 308 and 328 form a disulfide. Catalysis depends on Asp315, which acts as the Nucleophile; for pectinesterase activity. N-linked (GlcNAc...) asparagine glycosylation occurs at Asn351. Substrate contacts are provided by Arg380 and Trp382. Asn409 is a glycosylation site (N-linked (GlcNAc...) asparagine).

The protein in the N-terminal section; belongs to the PMEI family. In the C-terminal section; belongs to the pectinesterase family.

The protein localises to the secreted. It is found in the cell wall. The catalysed reaction is [(1-&gt;4)-alpha-D-galacturonosyl methyl ester](n) + n H2O = [(1-&gt;4)-alpha-D-galacturonosyl](n) + n methanol + n H(+). Its pathway is glycan metabolism; pectin degradation; 2-dehydro-3-deoxy-D-gluconate from pectin: step 1/5. In terms of biological role, acts in the modification of cell walls via demethylesterification of cell wall pectin. The protein is Putative pectinesterase/pectinesterase inhibitor 38 (PME38) of Arabidopsis thaliana (Mouse-ear cress).